We begin with the raw amino-acid sequence, 171 residues long: Mitochondrial import inner membrane translocase subunit Tim17-A (171 aa).

Cysteine 9 and cysteine 78 are disulfide-bonded. 3 consecutive transmembrane segments (helical) span residues cysteine 17–phenylalanine 37, glycine 63–aspartate 77, and valine 113–leucine 133. The interval phenylalanine 147 to glutamine 171 is disordered. The segment covering glutamine 153–proline 163 has biased composition (low complexity).

The protein belongs to the Tim17/Tim22/Tim23 family. In terms of assembly, component of the TIM23 complex at least composed of TIMM23, TIMM17 (TIMM17A or TIMM17B) and TIMM50. The complex interacts with the TIMM44 component of the PAM complex and with DNAJC15. Degraded by YMEL1 downstream of the integrated stress response (ISR).

The protein localises to the mitochondrion inner membrane. In terms of biological role, essential component of the TIM23 complex, a complex that mediates the translocation of transit peptide-containing proteins across the mitochondrial inner membrane. This Rattus norvegicus (Rat) protein is Mitochondrial import inner membrane translocase subunit Tim17-A (Timm17a).